A 329-amino-acid polypeptide reads, in one-letter code: 4-hydroxythreonine-4-phosphate dehydrogenase (329 aa).

Residues His136 and Thr137 each contribute to the substrate site. The a divalent metal cation site is built by His166, His211, and His266. Lys274, Asn283, and Arg292 together coordinate substrate.

Belongs to the PdxA family. In terms of assembly, homodimer. Zn(2+) serves as cofactor. The cofactor is Mg(2+). It depends on Co(2+) as a cofactor.

The protein localises to the cytoplasm. The enzyme catalyses 4-(phosphooxy)-L-threonine + NAD(+) = 3-amino-2-oxopropyl phosphate + CO2 + NADH. It participates in cofactor biosynthesis; pyridoxine 5'-phosphate biosynthesis; pyridoxine 5'-phosphate from D-erythrose 4-phosphate: step 4/5. Functionally, catalyzes the NAD(P)-dependent oxidation of 4-(phosphooxy)-L-threonine (HTP) into 2-amino-3-oxo-4-(phosphooxy)butyric acid which spontaneously decarboxylates to form 3-amino-2-oxopropyl phosphate (AHAP). The chain is 4-hydroxythreonine-4-phosphate dehydrogenase from Escherichia coli O7:K1 (strain IAI39 / ExPEC).